The following is a 335-amino-acid chain: 2,4-dienoyl-CoA reductase [(3E)-enoyl-CoA-producing], mitochondrial (335 aa).

The transit peptide at 1–34 directs the protein to the mitochondrion; sequence MALLGRAFFAGVSRLPCDPGPQRFFSFGTKTLYQ. Residues K42 and K49 each carry the N6-acetyllysine; alternate modification. 2 positions are modified to N6-succinyllysine; alternate: K42 and K49. Residue 66-71 coordinates NADP(+); that stretch reads GGGTGL. Position 69 is a phosphothreonine (T69). An N6-succinyllysine modification is found at K73. R91 lines the NADP(+) pocket. R91 contributes to the substrate binding site. N6-acetyllysine; alternate occurs at positions 97 and 106. N6-succinyllysine; alternate is present on residues K97 and K106. D117 serves as a coordination point for NADP(+). R119 and F149 together coordinate substrate. Y199 serves as the catalytic Proton acceptor. Residues K214 and 240-243 contribute to the NADP(+) site; that span reads PGPI. At K244 the chain carries N6-acetyllysine; alternate. K244 carries the N6-succinyllysine; alternate modification. R251 provides a ligand contact to substrate. At K260 the chain carries N6-acetyllysine; alternate. At K260 the chain carries N6-succinyllysine; alternate. N6-acetyllysine is present on K315. N6-acetyllysine; alternate is present on K319. K319 carries the N6-succinyllysine; alternate modification.

Belongs to the short-chain dehydrogenases/reductases (SDR) family. 2,4-dienoyl-CoA reductase subfamily. In terms of assembly, homotetramer.

It localises to the mitochondrion. The catalysed reaction is a (2E,4E)-dienoyl-CoA + NADPH + H(+) = a 4,5-saturated-(3E)-enoyl-CoA + NADP(+). It catalyses the reaction a (2E,4Z)-dienoyl-CoA + NADPH + H(+) = a 4,5-saturated-(3E)-enoyl-CoA + NADP(+). It carries out the reaction (2E,4E)-hexadienoyl-CoA + NADPH + H(+) = (3E)-hexenoyl-CoA + NADP(+). Functionally, auxiliary enzyme of beta-oxidation. It participates in the metabolism of unsaturated fatty enoyl-CoA esters having double bonds in both even- and odd-numbered positions in mitochondria. Catalyzes the NADP-dependent reduction of 2,4-dienoyl-CoA to yield trans-3-enoyl-CoA. The polypeptide is 2,4-dienoyl-CoA reductase [(3E)-enoyl-CoA-producing], mitochondrial (Decr1) (Mus musculus (Mouse)).